We begin with the raw amino-acid sequence, 256 residues long: Alcohol dehydrogenase (256 aa).

Ser2 carries the N-acetylserine modification. Residues 12–41 (FVAG…LDRI) and Asp65 contribute to the NAD(+) site. Residue Ser140 participates in substrate binding. The Proton acceptor role is filled by Tyr153. NAD(+) is bound at residue Lys157.

Belongs to the short-chain dehydrogenases/reductases (SDR) family. Homodimer.

It catalyses the reaction a primary alcohol + NAD(+) = an aldehyde + NADH + H(+). The catalysed reaction is a secondary alcohol + NAD(+) = a ketone + NADH + H(+). Inhibited by 2,2,2-trifluoroethanol and pyrazole. This chain is Alcohol dehydrogenase (Adh), found in Drosophila melanogaster (Fruit fly).